The sequence spans 200 residues: Lipopolysaccharide core heptose(II)-phosphate phosphatase (200 aa).

Positions 1 to 25 (MLAFCRSSLKSKKYFIILLALAAIA) are cleaved as a signal peptide.

Belongs to the phosphoglycerate mutase family. Ais subfamily.

It localises to the periplasm. It functions in the pathway bacterial outer membrane biogenesis; lipopolysaccharide metabolism. Its function is as follows. Catalyzes the dephosphorylation of heptose(II) of the outer membrane lipopolysaccharide core. This Escherichia coli O157:H7 protein is Lipopolysaccharide core heptose(II)-phosphate phosphatase.